We begin with the raw amino-acid sequence, 254 residues long: Cell division protein DivIB (254 aa).

Residues 1 to 21 (MPNAQIPVLKKNRTKKRTSRK) lie on the Cytoplasmic side of the membrane. A helical membrane pass occupies residues 22-42 (IAILLILLFIVLLAVLFFRSS). The Extracellular segment spans residues 43 to 254 (LSRVSEIRFD…EEGQEKDTTQ (212 aa)). In terms of domain architecture, POTRA spans 44–112 (SRVSEIRFDG…GIIAIHIKEF (69 aa)).

It belongs to the FtsQ/DivIB family. DivIB subfamily.

Its subcellular location is the cell membrane. In terms of biological role, cell division protein that may be involved in stabilizing or promoting the assembly of the division complex. This chain is Cell division protein DivIB, found in Paenibacillus polymyxa (strain E681).